Consider the following 494-residue polypeptide: Ketol-acid reductoisomerase (NADP(+)) (494 aa).

Positions 14-208 constitute a KARI N-terminal Rossmann domain; it reads LDQLGRCRFM…GGHRAGCLES (195 aa). NADP(+) contacts are provided by residues 45–48, Arg-68, Arg-76, Ser-78, and 108–110; these read CGAQ and DKQ. The active site involves His-132. Residue Gly-158 participates in NADP(+) binding. KARI C-terminal knotted domains lie at 209–344 and 345–487; these read SFVA…NYPA and SDVE…MSDM. Positions 217, 221, 389, and 393 each coordinate Mg(2+). Residue Ser-414 participates in substrate binding.

Belongs to the ketol-acid reductoisomerase family. It depends on Mg(2+) as a cofactor.

It catalyses the reaction (2R)-2,3-dihydroxy-3-methylbutanoate + NADP(+) = (2S)-2-acetolactate + NADPH + H(+). It carries out the reaction (2R,3R)-2,3-dihydroxy-3-methylpentanoate + NADP(+) = (S)-2-ethyl-2-hydroxy-3-oxobutanoate + NADPH + H(+). Its pathway is amino-acid biosynthesis; L-isoleucine biosynthesis; L-isoleucine from 2-oxobutanoate: step 2/4. It functions in the pathway amino-acid biosynthesis; L-valine biosynthesis; L-valine from pyruvate: step 2/4. Functionally, involved in the biosynthesis of branched-chain amino acids (BCAA). Catalyzes an alkyl-migration followed by a ketol-acid reduction of (S)-2-acetolactate (S2AL) to yield (R)-2,3-dihydroxy-isovalerate. In the isomerase reaction, S2AL is rearranged via a Mg-dependent methyl migration to produce 3-hydroxy-3-methyl-2-ketobutyrate (HMKB). In the reductase reaction, this 2-ketoacid undergoes a metal-dependent reduction by NADPH to yield (R)-2,3-dihydroxy-isovalerate. The chain is Ketol-acid reductoisomerase (NADP(+)) from Vibrio atlanticus (strain LGP32) (Vibrio splendidus (strain Mel32)).